We begin with the raw amino-acid sequence, 761 residues long: Pleckstrin homology domain-containing family M member 3 (761 aa).

At Ser-132 the chain carries Phosphoserine. 2 PH domains span residues 211–308 (NILK…EVVH) and 361–456 (NILK…IAAN). Residues 669–722 (SHVYSCSLCSQKGFICEICNNGEILYPFEDISTSRCESCGAVFHSECKEKSVPC) form a Phorbol-ester/DAG-type zinc finger.

Interacts with AKT1.

The protein localises to the cytoplasm. It is found in the golgi apparatus. The protein resides in the cell membrane. In terms of biological role, involved in skeletal muscle differentiation. May act as a scaffold protein for AKT1 during muscle differentiation. The sequence is that of Pleckstrin homology domain-containing family M member 3 from Homo sapiens (Human).